Reading from the N-terminus, the 455-residue chain is Argininosuccinate lyase (455 aa).

The protein belongs to the lyase 1 family. Argininosuccinate lyase subfamily.

The protein localises to the cytoplasm. It catalyses the reaction 2-(N(omega)-L-arginino)succinate = fumarate + L-arginine. It participates in amino-acid biosynthesis; L-arginine biosynthesis; L-arginine from L-ornithine and carbamoyl phosphate: step 3/3. The polypeptide is Argininosuccinate lyase (Shewanella denitrificans (strain OS217 / ATCC BAA-1090 / DSM 15013)).